The primary structure comprises 391 residues: Steroid side-chain-cleaving aldolase (391 aa).

Tyr-294 serves as the catalytic Proton acceptor. Catalysis depends on Tyr-344, which acts as the Proton donor.

Belongs to the thiolase-like superfamily. In terms of assembly, homodimer. Interacts with the ChsH1/ChsH2 hydratase via the DUF35 C-terminal region of ChsH2 (ChsH2-DUF35).

It catalyses the reaction 17-hydroxy-3-oxochol-4-en-22-oyl-CoA = androst-4-ene-3,17-dione + propanoyl-CoA. Functionally, probably involved in bile acid degradation. In vitro, when associated with the ChsH1/ChsH2 hydratase, catalyzes the retroaldol cleavage of 17-hydroxy-3-oxo-4-pregnene-20-carboxyl-CoA (17-HOPC-CoA), forming androst-4-ene-3,17-dione and propionyl-CoA. The in vivo substrate is probably a closely analogous bile acid degradation metabolite. This chain is Steroid side-chain-cleaving aldolase, found in Thermomonospora curvata (strain ATCC 19995 / DSM 43183 / JCM 3096 / KCTC 9072 / NBRC 15933 / NCIMB 10081 / Henssen B9).